We begin with the raw amino-acid sequence, 209 residues long: PRA1 family protein A2 (209 aa).

Transmembrane regions (helical) follow at residues 51–72 (LYYY…ALVT), 76–98 (ALVG…AASF), 142–162 (RWVF…SSCG), and 163–183 (LLWV…HASI).

Belongs to the PRA1 family.

The protein resides in the endosome membrane. In terms of biological role, may be involved in both secretory and endocytic intracellular trafficking in the endosomal/prevacuolar compartments. This is PRA1 family protein A2 (PRA1A2) from Arabidopsis thaliana (Mouse-ear cress).